Here is a 528-residue protein sequence, read N- to C-terminus: Peptide chain release factor 3 (528 aa).

The tr-type G domain occupies 11–279 (NKRRTFAIIS…GIVEWAPKPL (269 aa)). GTP contacts are provided by residues 20–27 (SHPDAGKT), 88–92 (DTPGH), and 142–145 (NKLD).

It belongs to the TRAFAC class translation factor GTPase superfamily. Classic translation factor GTPase family. PrfC subfamily.

Its subcellular location is the cytoplasm. In terms of biological role, increases the formation of ribosomal termination complexes and stimulates activities of RF-1 and RF-2. It binds guanine nucleotides and has strong preference for UGA stop codons. It may interact directly with the ribosome. The stimulation of RF-1 and RF-2 is significantly reduced by GTP and GDP, but not by GMP. In Shewanella sp. (strain W3-18-1), this protein is Peptide chain release factor 3.